The primary structure comprises 99 residues: U8-agatoxin-Ao1a (99 aa).

The N-terminal stretch at 1–19 (MKSLLFVTIAVYFVAQAVT) is a signal peptide. The propeptide occupies 20 to 45 (ANLLSNFLGSSLIDDDKGNMHKLYKR).

The protein belongs to the neurotoxin 02 (plectoxin) family. Contains 5 disulfide bonds. Expressed by the venom gland.

Its subcellular location is the secreted. This is U8-agatoxin-Ao1a from Agelena orientalis (Funnel-web spider).